A 398-amino-acid chain; its full sequence is GTP cyclohydrolase-2 (398 aa).

The tract at residues 1 to 172 (MNTPTHTHPH…TAAAGASTTE (172 aa)) is unknown. The interval 173–398 (YELVTRTPVP…VKSIPKTGHA (226 aa)) is GTP cyclohydrolase II. 220–224 (RVHSS) contributes to the GTP binding site. 3 residues coordinate Zn(2+): Cys-225, Cys-236, and Cys-238. GTP is bound by residues Gln-241, 263 to 265 (EGR), and Thr-285. Residue Asp-297 is the Proton acceptor of the active site. The Nucleophile role is filled by Arg-299. GTP-binding residues include Ser-320 and Lys-325. Positions 375-398 (QRPQDPSETVDGETVKSIPKTGHA) are disordered.

The protein in the C-terminal section; belongs to the GTP cyclohydrolase II family. Requires Zn(2+) as cofactor.

The catalysed reaction is GTP + 4 H2O = 2,5-diamino-6-hydroxy-4-(5-phosphoribosylamino)-pyrimidine + formate + 2 phosphate + 3 H(+). The protein operates within cofactor biosynthesis; riboflavin biosynthesis; 5-amino-6-(D-ribitylamino)uracil from GTP: step 1/4. Its function is as follows. Catalyzes the conversion of GTP to 2,5-diamino-6-ribosylamino-4(3H)-pyrimidinone 5'-phosphate (DARP), formate and pyrophosphate. The polypeptide is GTP cyclohydrolase-2 (ribA) (Xylella fastidiosa (strain 9a5c)).